A 547-amino-acid chain; its full sequence is CTP synthase (547 aa).

Residues 1-265 are amidoligase domain; that stretch reads MTRYVFITGG…DEIVLRKLHI (265 aa). S13 provides a ligand contact to CTP. A UTP-binding site is contributed by S13. Residues 14-19 and D71 each bind ATP; that span reads SLGKGI. D71 and E139 together coordinate Mg(2+). Residues 146-148, 186-191, and K222 each bind CTP; these read DIE and KTKPTQ. Residues 186–191 and K222 each bind UTP; that span reads KTKPTQ. The Glutamine amidotransferase type-1 domain occupies 290-541; that stretch reads TVGMVGKYVD…IRAARAQHEK (252 aa). G351 lines the L-glutamine pocket. C378 serves as the catalytic Nucleophile; for glutamine hydrolysis. L-glutamine contacts are provided by residues 379 to 382, E402, and R469; that span reads LGMQ. Active-site residues include H514 and E516.

The protein belongs to the CTP synthase family. As to quaternary structure, homotetramer.

The enzyme catalyses UTP + L-glutamine + ATP + H2O = CTP + L-glutamate + ADP + phosphate + 2 H(+). The catalysed reaction is L-glutamine + H2O = L-glutamate + NH4(+). It catalyses the reaction UTP + NH4(+) + ATP = CTP + ADP + phosphate + 2 H(+). The protein operates within pyrimidine metabolism; CTP biosynthesis via de novo pathway; CTP from UDP: step 2/2. Its activity is regulated as follows. Allosterically activated by GTP, when glutamine is the substrate; GTP has no effect on the reaction when ammonia is the substrate. The allosteric effector GTP functions by stabilizing the protein conformation that binds the tetrahedral intermediate(s) formed during glutamine hydrolysis. Inhibited by the product CTP, via allosteric rather than competitive inhibition. Catalyzes the ATP-dependent amination of UTP to CTP with either L-glutamine or ammonia as the source of nitrogen. Regulates intracellular CTP levels through interactions with the four ribonucleotide triphosphates. This chain is CTP synthase, found in Thioalkalivibrio sulfidiphilus (strain HL-EbGR7).